The sequence spans 196 residues: Molybdenum cofactor guanylyltransferase (196 aa).

GTP contacts are provided by residues 10–12, Lys23, Asn51, Asp69, and Asp99; that span reads LAG. Position 99 (Asp99) interacts with Mg(2+).

The protein belongs to the MobA family. As to quaternary structure, monomer. Mg(2+) is required as a cofactor.

The protein resides in the cytoplasm. The catalysed reaction is Mo-molybdopterin + GTP + H(+) = Mo-molybdopterin guanine dinucleotide + diphosphate. In terms of biological role, transfers a GMP moiety from GTP to Mo-molybdopterin (Mo-MPT) cofactor (Moco or molybdenum cofactor) to form Mo-molybdopterin guanine dinucleotide (Mo-MGD) cofactor. This Shewanella woodyi (strain ATCC 51908 / MS32) protein is Molybdenum cofactor guanylyltransferase.